Here is a 104-residue protein sequence, read N- to C-terminus: Type VII secretion system extracellular protein B (104 aa).

Belongs to the WXG100 family. As to quaternary structure, homodimer. When mixed with EsxA does not form heterodimers.

The protein localises to the secreted. In terms of biological role, virulence factor that is important for the establishment of infection in the host. EsxB is required for EsxA synthesis as well as secretion. Mediates together with EsxA the release of S.aureus from the host cell. Also inhibits host cytokine production and thus modulates dendritic cell-mediated immunity. This Staphylococcus aureus (strain MSSA476) protein is Type VII secretion system extracellular protein B.